The sequence spans 175 residues: MGIKSIVINEQQIEEGCQKAVNWCNAKFNNKKVIVLGILKGCIPFLGKVISKFSFDLQLDFMAVASYHGSHVQKQPPKIVLDMSHDPKDKDILLIEDIVDSGRSIKLVIDLLKTRHAKSITLISLIEKIKPKAFDINIDFSCFKVKDNFLVGFGLDYDGFYRNLPYVGVFEPDNP.

The diphosphate site is built by K40 and G41. Residues E96 and D97 each coordinate Mg(2+). The Proton acceptor role is filled by D100. GMP-binding positions include K128, 149 to 150 (FL), and D156. R162 is a binding site for diphosphate.

It belongs to the purine/pyrimidine phosphoribosyltransferase family. It depends on Mg(2+) as a cofactor.

The protein resides in the cytoplasm. The catalysed reaction is IMP + diphosphate = hypoxanthine + 5-phospho-alpha-D-ribose 1-diphosphate. It carries out the reaction GMP + diphosphate = guanine + 5-phospho-alpha-D-ribose 1-diphosphate. The protein operates within purine metabolism; IMP biosynthesis via salvage pathway; IMP from hypoxanthine: step 1/1. Its pathway is purine metabolism; GMP biosynthesis via salvage pathway; GMP from guanine: step 1/1. Purine salvage pathway enzyme that catalyzes the transfer of the ribosyl-5-phosphate group from 5-phospho-alpha-D-ribose 1-diphosphate (PRPP) to the N9 position of the 6-oxopurines hypoxanthine and guanine to form the corresponding ribonucleotides IMP (inosine 5'-monophosphate) and GMP (guanosine 5'-monophosphate), with the release of PPi. This is Hypoxanthine-guanine phosphoribosyltransferase (hpt) from Mycoplasma genitalium (strain ATCC 33530 / DSM 19775 / NCTC 10195 / G37) (Mycoplasmoides genitalium).